A 114-amino-acid polypeptide reads, in one-letter code: Hydrogenase maturation factor HypA (114 aa).

Position 2 (His2) interacts with Ni(2+). 4 residues coordinate Zn(2+): Cys73, Cys76, Cys90, and Cys93.

The protein belongs to the HypA/HybF family.

Functionally, involved in the maturation of [NiFe] hydrogenases. Required for nickel insertion into the metal center of the hydrogenase. This Chloroflexus aurantiacus (strain ATCC 29366 / DSM 635 / J-10-fl) protein is Hydrogenase maturation factor HypA.